The primary structure comprises 782 residues: Potassium transporter 6 (782 aa).

At 1–18 (MEIESGSYQNAKKESWRT) the chain is on the cytoplasmic side. The helical transmembrane segment at 19 to 39 (VLTLAYQSLGVVYGDLSISPL) threads the bilayer. Over 40 to 61 (YVYKSTFAEDIHHSESNEEIFG) the chain is Extracellular. The helical transmembrane segment at 62–82 (VLSFIFWTITLVPLLKYVFIV) threads the bilayer. Over 83–153 (LRADDNGEGG…TLEKHGVLQK (71 aa)) the chain is Cytoplasmic. The chain crosses the membrane as a helical span at residues 154-174 (ILLVLALIGTCMVIGDGVLTP). Residues 175 to 195 (AISVFSAVSGVELSMSKEHHK) lie on the Extracellular side of the membrane. A helical membrane pass occupies residues 196–216 (YIELPAACVILIGLFALQHYG). Residues 217-219 (THR) lie on the Cytoplasmic side of the membrane. The chain crosses the membrane as a helical span at residues 220-240 (VGFLFAPVILLWLMCISAIGV). Residues 241 to 270 (YNIFHWNPHVYQALSPYYMYKFLKKTQSRG) are Extracellular-facing. A helical transmembrane segment spans residues 271-291 (WMSLGGILLCITGSEAMFADL). Topologically, residues 292-296 (GHFSQ) are cytoplasmic. A helical membrane pass occupies residues 297–317 (LSIKIAFTSLVYPSLILAYMG). The Extracellular portion of the chain corresponds to 318–347 (QAAYLSQHHIIESEYNIGFYVSVPERLRWP). A helical membrane pass occupies residues 348-368 (VLVIAILAAVVGSQAIITGTF). At 369–395 (SIIKQCSALGCFPKVKIVHTSSKIHGQ) the chain is on the cytoplasmic side. The chain crosses the membrane as a helical span at residues 396–416 (IYIPEINWILMVLCLAVTIGF). Residues 417 to 421 (RDTKR) lie on the Extracellular side of the membrane. 2 helical membrane passes run 422–442 (LGNA…CLMS) and 443–463 (LVIV…VVFF). The Extracellular segment spans residues 464–474 (GTIESLYFSAS). Residues 475–495 (LIKFLEGAWVPIALAFCFLLA) traverse the membrane as a helical segment. The Cytoplasmic portion of the chain corresponds to 496 to 782 (MCTWHYGTLK…TLEVGMIYNV (287 aa)). A compositionally biased stretch (basic and acidic residues) spans 664-675 (YESDIDDPDKPG). The segment at 664–693 (YESDIDDPDKPGTSEIRSPKPKKKSKSKVK) is disordered. The span at 682–693 (PKPKKKSKSKVK) shows a compositional bias: basic residues.

Belongs to the HAK/KUP transporter (TC 2.A.72.3) family.

Its subcellular location is the cell membrane. Functionally, probable potassium transporter. This is Potassium transporter 6 (POT6) from Arabidopsis thaliana (Mouse-ear cress).